The primary structure comprises 403 residues: MLSIKRTLLLLGAVLPAVFGAPVQETRRAAQKIPGKYIVTFKPGTDAATIESHTLWATDLHKRNLERRDATSGEPPIGIEKNYKIKDFAAYAGSFDDTTIEEIRKSADVAHVEEDQIWYIDALTTQKGAPWGLGSISHKGQASTDYIYDTSAGAGTYAYVVDTGINVNHVEFEGRASLAYNAAGGSHVDSVGHGTHVAGTIGGKTYGVAKKTNLLSVKVFQGESSSTSIILDGFNWAANDIVSKGRTRKAAINMSLGGGYSYAFNNAVENAFDEGVLSVVAAGNENTDASNTSPASAPNALTVAAINRSNARASFSNYGSVVDIFAPGQDILSAWIGSNTATNTISGTSMATPHIVGLSVYLMGLESLSGPAAVTSRIKQLATNGVVTNAQGSPNKLAYNGNA.

The signal sequence occupies residues 1-21 (MLSIKRTLLLLGAVLPAVFGA). Residues 22-125 (PVQETRRAAQ…QIWYIDALTT (104 aa)) constitute a propeptide that is removed on maturation. The 85-residue stretch at 36–120 (KYIVTFKPGT…HVEEDQIWYI (85 aa)) folds into the Inhibitor I9 domain. In terms of domain architecture, Peptidase S8 spans 130–403 (PWGLGSISHK…PNKLAYNGNA (274 aa)). Residues D162 and H193 each act as charge relay system in the active site. N-linked (GlcNAc...) asparagine glycans are attached at residues N253 and N307. The active-site Charge relay system is the S349.

It belongs to the peptidase S8 family.

It is found in the secreted. It catalyses the reaction Hydrolysis of proteins with broad specificity, and of Bz-Arg-OEt &gt; Ac-Tyr-OEt. Does not hydrolyze peptide amides.. Its function is as follows. Secreted alkaline protease that allows assimilation of proteinaceous substrates. The protein is Alkaline protease 1 (alp1) of Neosartorya fischeri (strain ATCC 1020 / DSM 3700 / CBS 544.65 / FGSC A1164 / JCM 1740 / NRRL 181 / WB 181) (Aspergillus fischerianus).